The chain runs to 177 residues: dCTP deaminase (177 aa).

DCTP is bound by residues 100 to 105 (RSSIAR) and Asp116. Glu126 (proton donor/acceptor) is an active-site residue. Tyr159 and Gln166 together coordinate dCTP.

It belongs to the dCTP deaminase family. In terms of assembly, homotrimer.

It catalyses the reaction dCTP + H2O + H(+) = dUTP + NH4(+). It participates in pyrimidine metabolism; dUMP biosynthesis; dUMP from dCTP (dUTP route): step 1/2. Its function is as follows. Catalyzes the deamination of dCTP to dUTP. The sequence is that of dCTP deaminase from Korarchaeum cryptofilum (strain OPF8).